Reading from the N-terminus, the 382-residue chain is Queuine tRNA-ribosyltransferase (382 aa).

D96 functions as the Proton acceptor in the catalytic mechanism. Residues D96–F100, D151, Q194, and G221 each bind substrate. Residues G252–S258 are RNA binding. The active-site Nucleophile is D271. The tract at residues T276–R280 is RNA binding; important for wobble base 34 recognition. Zn(2+) contacts are provided by C309, C311, C314, and H340.

This sequence belongs to the queuine tRNA-ribosyltransferase family. As to quaternary structure, homodimer. Within each dimer, one monomer is responsible for RNA recognition and catalysis, while the other monomer binds to the replacement base PreQ1. It depends on Zn(2+) as a cofactor.

The catalysed reaction is 7-aminomethyl-7-carbaguanine + guanosine(34) in tRNA = 7-aminomethyl-7-carbaguanosine(34) in tRNA + guanine. It participates in tRNA modification; tRNA-queuosine biosynthesis. Its function is as follows. Catalyzes the base-exchange of a guanine (G) residue with the queuine precursor 7-aminomethyl-7-deazaguanine (PreQ1) at position 34 (anticodon wobble position) in tRNAs with GU(N) anticodons (tRNA-Asp, -Asn, -His and -Tyr). Catalysis occurs through a double-displacement mechanism. The nucleophile active site attacks the C1' of nucleotide 34 to detach the guanine base from the RNA, forming a covalent enzyme-RNA intermediate. The proton acceptor active site deprotonates the incoming PreQ1, allowing a nucleophilic attack on the C1' of the ribose to form the product. After dissociation, two additional enzymatic reactions on the tRNA convert PreQ1 to queuine (Q), resulting in the hypermodified nucleoside queuosine (7-(((4,5-cis-dihydroxy-2-cyclopenten-1-yl)amino)methyl)-7-deazaguanosine). In Lactococcus lactis subsp. lactis (strain IL1403) (Streptococcus lactis), this protein is Queuine tRNA-ribosyltransferase.